The primary structure comprises 285 residues: Malonyl-[acyl-carrier protein] O-methyltransferase (285 aa).

Belongs to the methyltransferase superfamily.

The enzyme catalyses malonyl-[ACP] + S-adenosyl-L-methionine = malonyl-[ACP] methyl ester + S-adenosyl-L-homocysteine. It participates in cofactor biosynthesis; biotin biosynthesis. Converts the free carboxyl group of a malonyl-thioester to its methyl ester by transfer of a methyl group from S-adenosyl-L-methionine (SAM). It allows to synthesize pimeloyl-ACP via the fatty acid synthetic pathway. The sequence is that of Malonyl-[acyl-carrier protein] O-methyltransferase from Bacillus cytotoxicus (strain DSM 22905 / CIP 110041 / 391-98 / NVH 391-98).